The primary structure comprises 143 residues: Nucleoside diphosphate kinase (143 aa).

Positions 11, 59, 87, 93, 104, and 114 each coordinate ATP. Residue histidine 117 is the Pros-phosphohistidine intermediate of the active site.

Belongs to the NDK family. Homotetramer. Mg(2+) is required as a cofactor.

It localises to the cytoplasm. The enzyme catalyses a 2'-deoxyribonucleoside 5'-diphosphate + ATP = a 2'-deoxyribonucleoside 5'-triphosphate + ADP. It catalyses the reaction a ribonucleoside 5'-diphosphate + ATP = a ribonucleoside 5'-triphosphate + ADP. Major role in the synthesis of nucleoside triphosphates other than ATP. The ATP gamma phosphate is transferred to the NDP beta phosphate via a ping-pong mechanism, using a phosphorylated active-site intermediate. The polypeptide is Nucleoside diphosphate kinase (Escherichia coli O81 (strain ED1a)).